We begin with the raw amino-acid sequence, 150 residues long: MQIILLEKVANLGNLGDIVKVKDGYARNFLIPNRKARRATKEAIAEFEVRRAELEKIAAEKLAASQAVGEKLNGQSFEITQKSGVDGRLFGSVTNGDVAELLKKAGYEVEKLQVRMPEGPLKMIGEHNVQVALHTDVVVDVTINVIGDHA.

It belongs to the bacterial ribosomal protein bL9 family.

Functionally, binds to the 23S rRNA. In Burkholderia cenocepacia (strain HI2424), this protein is Large ribosomal subunit protein bL9.